The following is a 242-amino-acid chain: Small ribosomal subunit protein uS2 (242 aa).

It belongs to the universal ribosomal protein uS2 family.

This Neisseria meningitidis serogroup B (strain ATCC BAA-335 / MC58) protein is Small ribosomal subunit protein uS2.